A 257-amino-acid polypeptide reads, in one-letter code: Putative hydro-lyase Bamb_5282 (257 aa).

It belongs to the D-glutamate cyclase family.

The protein is Putative hydro-lyase Bamb_5282 of Burkholderia ambifaria (strain ATCC BAA-244 / DSM 16087 / CCUG 44356 / LMG 19182 / AMMD) (Burkholderia cepacia (strain AMMD)).